The sequence spans 228 residues: Thymidylate kinase (228 aa).

20–27 (GGEGSGKS) serves as a coordination point for ATP.

Belongs to the thymidylate kinase family.

The enzyme catalyses dTMP + ATP = dTDP + ADP. Phosphorylation of dTMP to form dTDP in both de novo and salvage pathways of dTTP synthesis. The chain is Thymidylate kinase from Afipia carboxidovorans (strain ATCC 49405 / DSM 1227 / KCTC 32145 / OM5) (Oligotropha carboxidovorans).